We begin with the raw amino-acid sequence, 442 residues long: Putative nucleotide-sugar transporter YMD8 (442 aa).

The Cytoplasmic portion of the chain corresponds to 1–3; that stretch reads MNR. A helical transmembrane segment spans residues 4–24; that stretch reads TVFLAFVFGWYFCSIALSIYN. Over 25 to 32 the chain is Extracellular; it reads RWMFDPKD. The chain crosses the membrane as a helical span at residues 33–53; that stretch reads GLGIGYPVLVTTFHQATLWLL. Residues 54–76 lie on the Cytoplasmic side of the membrane; that stretch reads SGIYIKLRHKPVKNVLRKNNGFN. A helical membrane pass occupies residues 77-97; sequence WSFFLKFLLPTAVASAGDIGL. The Extracellular segment spans residues 98–107; it reads SNVSFQYVPL. Residue asparagine 99 is glycosylated (N-linked (GlcNAc...) asparagine). The helical transmembrane segment at 108 to 128 threads the bilayer; sequence TIYTIIKSSSIAFVLLFGCIF. The Cytoplasmic portion of the chain corresponds to 129–132; the sequence is KLEK. The helical transmembrane segment at 133-153 threads the bilayer; that stretch reads FHWKLALSVIIMFVGVALMVF. Topologically, residues 154–166 are extracellular; sequence KPSDSTSTKNDQA. A helical transmembrane segment spans residues 167 to 187; sequence LVIFGSFLVLASSCLSGLRWV. Over 188 to 254 the chain is Cytoplasmic; sequence YTQLMLRNNP…PIHTIHQLAP (67 aa). Serine 209 carries the phosphoserine modification. Residues 255–275 form a helical membrane-spanning segment; it reads IMGITLLLTSLLVEKPFPGIF. Residues 276–301 lie on the Extracellular side of the membrane; the sequence is SSSIFRLDTSNGGVGTETTVLSIVRG. The helical transmembrane segment at 302-322 threads the bilayer; that stretch reads IVLLILPGFAVFLLTICEFSI. Residues 323–329 lie on the Cytoplasmic side of the membrane; it reads LEQTPVL. A helical transmembrane segment spans residues 330 to 350; sequence TVSIVGIVKELLTVIFGIIIL. Over 351–355 the chain is Extracellular; it reads SERLS. The chain crosses the membrane as a helical span at residues 356–376; it reads GFYNWLGMLIIMADVCYYNYF. Residues 377–442 lie on the Cytoplasmic side of the membrane; it reads RYKQDLLQKY…QNVSRSSQQV (66 aa).

This sequence belongs to the TPT transporter family. SLC35C subfamily.

It localises to the golgi apparatus membrane. The protein localises to the cytoplasmic vesicle. Its subcellular location is the COPI-coated vesicle membrane. The sequence is that of Putative nucleotide-sugar transporter YMD8 (YMD8) from Saccharomyces cerevisiae (strain ATCC 204508 / S288c) (Baker's yeast).